The primary structure comprises 323 residues: Aldo-keto reductase family 1 member C23-like protein (323 aa).

NADP(+) is bound at residue 20–24 (GFGTY). Residue Lys-31 coordinates substrate. Asp-50 lines the NADP(+) pocket. Catalysis depends on Tyr-55, which acts as the Proton donor. His-117 contacts substrate. NADP(+) is bound by residues 166 to 167 (SN), Gln-190, 216 to 222 (YGALGTQ), and 270 to 280 (KSYNEKRIKEN).

It belongs to the aldo/keto reductase family. As to quaternary structure, monomer. As to expression, detected in endometrium surface epithelium (at protein level). Detected in endometrium.

Its subcellular location is the cytoplasm. NADP-dependent oxidoreductase involved in steroid metabolism. May act on various hydroxysteroids. This is Aldo-keto reductase family 1 member C23-like protein (PGFS) from Equus caballus (Horse).